A 245-amino-acid chain; its full sequence is 5'-nucleotidase SurE (245 aa).

Residues Asp-8, Asp-9, Ser-39, and Asn-97 each contribute to the a divalent metal cation site.

Belongs to the SurE nucleotidase family. It depends on a divalent metal cation as a cofactor.

It localises to the cytoplasm. The enzyme catalyses a ribonucleoside 5'-phosphate + H2O = a ribonucleoside + phosphate. In terms of biological role, nucleotidase that shows phosphatase activity on nucleoside 5'-monophosphates. This Clostridium kluyveri (strain NBRC 12016) protein is 5'-nucleotidase SurE.